The following is a 546-amino-acid chain: 6'''-hydroxyparomomycin C oxidase (546 aa).

A disordered region spans residues 1-30; that stretch reads MERLRGPSPLENTTARHPAPLGPAHRDGLE. The Proton acceptor role is filled by H475.

The protein belongs to the GMC oxidoreductase family. FAD is required as a cofactor.

Its pathway is antibiotic biosynthesis; lividomycin biosynthesis. In terms of biological role, glucosaminyl-6'-oxidase involved in the biosynthetic pathway of lividomycin by mediating FAD-dependent dehydrogenation of 6'''-hydroxyparomomycin to paromomycin. In Streptomyces lividus, this protein is 6'''-hydroxyparomomycin C oxidase (livQ).